A 1762-amino-acid polypeptide reads, in one-letter code: Non-reducing polyketide synthase PKS8-1 (1762 aa).

An N-terminal acylcarrier protein transacylase domain (SAT) region spans residues 17 to 247 (DIYRGLHNHS…ARYIELPVYG (231 aa)). The Ketosynthase family 3 (KS3) domain maps to 385–819 (QSKLAITGIS…GGNTTMVLEE (435 aa)). Residues Cys558, His694, and His737 each act as for beta-ketoacyl synthase activity in the active site. Positions 920 to 1240 (FSFTGQGASH…MAALHLTGVA (321 aa)) are malonyl-CoA:ACP transacylase (MAT) domain. Residues 1308–1622 (TSTVQQVIAL…PRILLNRFFS (315 aa)) form a product template (PT) domain region. The N-terminal hotdog fold stretch occupies residues 1312–1448 (QQVIALEVEG…GDANDWLSSW (137 aa)). A PKS/mFAS DH domain is found at 1312-1618 (QQVIALEVEG…FRSYPRILLN (307 aa)). Catalysis depends on His1344, which acts as the Proton acceptor; for dehydratase activity. The interval 1471–1618 (ASRFTRNMAY…FRSYPRILLN (148 aa)) is C-terminal hotdog fold. Residue Asp1529 is the Proton donor; for dehydratase activity of the active site. Residues 1632 to 1689 (RAGNAATVTPQVTIPKPPSSLKTPAPANPSRRDSGVESKPLPPPQPKQAPPSTDSENS) form a disordered region. A compositionally biased stretch (pro residues) spans 1671 to 1680 (PLPPPQPKQA). Residues 1685-1762 (DSENSTISKA…DMRRWLEEHY (78 aa)) enclose the Carrier domain. At Ser1722 the chain carries O-(pantetheine 4'-phosphoryl)serine.

The enzyme catalyses holo-[ACP] + 8 malonyl-CoA + 8 H(+) = atrochrysone carboxyl-[ACP] + 8 CO2 + 8 CoA + 2 H2O. Its pathway is secondary metabolite biosynthesis. Its function is as follows. Non-reducing polyketide synthase; part of the gene cluster that mediates the biosynthesis of an emodin derivative that may be involved in black Sigatoka disease of banana. The pathway begins with the synthesis of atrochrysone thioester by the polyketide synthase PKS8-1. The atrochrysone carboxyl ACP thioesterase MYCFIDRAFT_190111 then breaks the thioester bond and releases the atrochrysone carboxylic acid from PKS8-1. The decarboxylase MYCFIDRAFT_34057 then catalyzes the concerted decarboxylation-elimination required to convert atochrysone carboxylic acid into emodin anthrone, which is further oxidized to emodin by the anthrone oxygenase MYCFIDRAFT_34418. The functions of the other tailoring enzymes as well as the final product of the cluster have still to be identified. The polypeptide is Non-reducing polyketide synthase PKS8-1 (PKS8-1) (Pseudocercospora fijiensis (strain CIRAD86) (Black leaf streak disease fungus)).